We begin with the raw amino-acid sequence, 306 residues long: Acetyl-coenzyme A carboxylase carboxyl transferase subunit beta (306 aa).

In terms of domain architecture, CoA carboxyltransferase N-terminal spans 27–296 (LWHKCPSCEA…PEFVAAPVEP (270 aa)). Zn(2+) contacts are provided by Cys-31, Cys-34, Cys-50, and Cys-53. Residues 31-53 (CPSCEAVLYRPELEKTLDVCPKC) form a C4-type zinc finger.

The protein belongs to the AccD/PCCB family. In terms of assembly, acetyl-CoA carboxylase is a heterohexamer composed of biotin carboxyl carrier protein (AccB), biotin carboxylase (AccC) and two subunits each of ACCase subunit alpha (AccA) and ACCase subunit beta (AccD). The cofactor is Zn(2+).

It localises to the cytoplasm. It catalyses the reaction N(6)-carboxybiotinyl-L-lysyl-[protein] + acetyl-CoA = N(6)-biotinyl-L-lysyl-[protein] + malonyl-CoA. It functions in the pathway lipid metabolism; malonyl-CoA biosynthesis; malonyl-CoA from acetyl-CoA: step 1/1. Component of the acetyl coenzyme A carboxylase (ACC) complex. Biotin carboxylase (BC) catalyzes the carboxylation of biotin on its carrier protein (BCCP) and then the CO(2) group is transferred by the transcarboxylase to acetyl-CoA to form malonyl-CoA. In Pseudomonas fluorescens (strain ATCC BAA-477 / NRRL B-23932 / Pf-5), this protein is Acetyl-coenzyme A carboxylase carboxyl transferase subunit beta.